Consider the following 99-residue polypeptide: uncharacterized protein (99 aa).

Residues Glu10–Gly29 traverse the membrane as a helical segment.

The protein localises to the membrane. This is an uncharacterized protein from Schizosaccharomyces pombe (strain 972 / ATCC 24843) (Fission yeast).